The primary structure comprises 541 residues: Nuclear receptor subfamily 5 group A member 2 (541 aa).

Polar residues predominate over residues methionine 1–leucine 10. Positions methionine 1–alanine 35 are disordered. Residues glutamate 83–glutamate 154 constitute a DNA-binding region (nuclear receptor). 8 residues coordinate Zn(2+): cysteine 86, cysteine 89, cysteine 103, cysteine 106, cysteine 122, cysteine 128, cysteine 138, and cysteine 141. NR C4-type zinc fingers lie at residues cysteine 86 to cysteine 106 and cysteine 122 to cysteine 146. The tract at residues lysine 152–lysine 167 is C-terminal extension (CTE). The FTZ-F1 box motif lies at phenylalanine 168–arginine 187. Residue lysine 270 forms a Glycyl lysine isopeptide (Lys-Gly) (interchain with G-Cter in SUMO1) linkage. Positions serine 300–lysine 539 constitute an NR LBD domain. Residues glycine 421–leucine 424, tyrosine 516, and lysine 520 each bind a phospholipid derivative. Positions tyrosine 528 to lysine 539 are AF-2.

This sequence belongs to the nuclear hormone receptor family. NR5 subfamily. Monomer; Binds DNA as a monomer. Interacts with nuclear receptor corepressors NR0B1 and NR0B2; repressing NR5A2 nuclear receptor activity. Interacts with nuclear receptor coactivators CTNNB1, PPARGC1A and NCOA2; interaction takes place following ligand-binding and promotes target gene activation. Interacts (when sumoylated) with GPS2; interaction with GPS2 onto hepatic acute phase protein promoters prevents N-Cor corepressor complex dissociation. Interacts with HNF1A. Interacts with GRIP1. Sumoylated by SUMO1 at Lys-270 during the hepatic acute phase response, leading to promote interaction with GPS2 and prevent N-Cor corepressor complex dissociation. In terms of tissue distribution, abundantly expressed in pancreas, less in liver, very low levels in heart and lung. Expressed in the Hep-G2 cell line. Isoform 1 and isoform 2 seem to be present in fetal and adult liver and Hep-G2 cells.

Its subcellular location is the nucleus. It is found in the chromosome. Activated by synthetic agonists RR-RJW100, SR-RJW100, endo sulfamide compound 6N and GSK8470. Its function is as follows. Orphan nuclear receptor that binds DNA as a monomer to the 5'-TCAAGGCCA-3' sequence and controls expression of target genes: regulates key biological processes, such as early embryonic development, cholesterol and bile acid synthesis pathways, as well as liver and pancreas morphogenesis. Ligand-binding causes conformational change which causes recruitment of coactivators, promoting target gene activation. The specific ligand is unknown, but specific phospholipids, such as phosphatidylethanolamine, phosphatidylserine, dilauroyl phosphatidylcholine and diundecanoyl phosphatidylcholine can act as ligand in vitro. Acts as a pioneer transcription factor, which unwraps target DNA from histones and elicits local opening of closed chromatin. Plays a central role during preimplantation stages of embryonic development. Plays a minor role in zygotic genome activation (ZGA) by regulating a small set of two-cell stage genes. Plays a major role in morula development (2-16 cells embryos) by acting as a master regulator at the 8-cell stage, controlling expression of lineage-specifying transcription factors and genes involved in mitosis, telomere maintenance and DNA repair. Zygotic NR5A2 binds to both closed and open chromatin with other transcription factors, often at SINE B1/Alu repeats DNA elements, promoting chromatin accessibility at nearby regulatory regions. Also involved in the epiblast stage of development and embryonic stem cell pluripotency, by promoting expression of POU5F1/OCT4. Regulates other processes later in development, such as formation of connective tissue in lower jaw and middle ear, neural stem cell differentiation, ovarian follicle development and Sertoli cell differentiation. Involved in exocrine pancreas development and acinar cell differentiation. Acts as an essential transcriptional regulator of lipid metabolism. Key regulator of cholesterol 7-alpha-hydroxylase gene (CYP7A) expression in liver. Also acts as a negative regulator of inflammation in different organs, such as, liver and pancreas. Protects against intestinal inflammation via its ability to regulate glucocorticoid production. Plays an anti-inflammatory role during the hepatic acute phase response by acting as a corepressor: inhibits the hepatic acute phase response by preventing dissociation of the N-Cor corepressor complex. Acts as a regulator of immunity by promoting lymphocyte T-cell development, proliferation and effector functions. Also involved in resolution of endoplasmic reticulum stress in the liver. In terms of biological role, in constrast to isoform 1 and isoform 2, does not induce cholesterol 7-alpha-hydroxylase gene (CYP7A) promoter activity. (Microbial infection) Plays a crucial role for hepatitis B virus gene transcription and DNA replication. Mechanistically, synergistically cooperates with HNF1A to up-regulate the activity of one of the critical cis-elements in the hepatitis B virus genome enhancer II (ENII). The chain is Nuclear receptor subfamily 5 group A member 2 from Homo sapiens (Human).